Reading from the N-terminus, the 632-residue chain is 2-hydroxyacyl-CoA lyase 2 (632 aa).

The chain crosses the membrane as a helical span at residues Phe-13–Ala-33. Glu-98 is a binding site for thiamine diphosphate. Ser-369 carries the post-translational modification Phosphoserine. The segment at Asp-470 to Gly-550 is thiamine pyrophosphate binding. Residues Asp-521 and Asn-547 each coordinate Mg(2+).

Belongs to the TPP enzyme family. It depends on Mg(2+) as a cofactor. Thiamine diphosphate is required as a cofactor.

The protein localises to the endoplasmic reticulum membrane. The enzyme catalyses 2-hydroxyoctadecanoyl-CoA = heptadecanal + formyl-CoA. It catalyses the reaction (2R)-hydroxyhexadecanoyl-CoA = pentadecanal + formyl-CoA. In terms of biological role, endoplasmic reticulum 2-OH acyl-CoA lyase involved in the cleavage (C1 removal) reaction in the fatty acid alpha-oxydation in a thiamine pyrophosphate (TPP)-dependent manner. Involved in the phytosphingosine degradation pathway. This is 2-hydroxyacyl-CoA lyase 2 (Ilvbl) from Mus musculus (Mouse).